The chain runs to 135 residues: Retinol-binding protein 1 (135 aa).

The segment at 22 to 32 is important for interaction with STRA6; that stretch reads RALDVNVALRK. Residues lysine 41, methionine 63, and glutamine 109 each contribute to the all-trans-retinol site.

The protein belongs to the calycin superfamily. Fatty-acid binding protein (FABP) family. Interacts (only as retinol-free apoprotein) with STRA6.

Its subcellular location is the cytoplasm. The protein localises to the lipid droplet. Cytoplasmic retinol-binding protein. Accepts retinol from the transport protein STRA6, and thereby contributes to retinol uptake, storage and retinoid homeostasis. This is Retinol-binding protein 1 (Rbp1) from Rattus norvegicus (Rat).